The primary structure comprises 204 residues: uncharacterized protein (204 aa).

Disordered stretches follow at residues 1–37 and 159–204; these read MRAL…GSVS and GYRP…DGEL. Residues 28 to 37 show a composition bias toward low complexity; sequence GRGPRAGSVS. The WGR domain maps to 88 to 175; the sequence is PYRLYVERLD…LPKEKWPAEA (88 aa). Composition is skewed to basic and acidic residues over residues 166 to 179 and 188 to 204; these read LPKE…EHES and PEGH…DGEL.

This is an uncharacterized protein from Sinorhizobium fredii (strain NBRC 101917 / NGR234).